The sequence spans 357 residues: Peptide chain release factor 1 (357 aa).

Gln-234 bears the N5-methylglutamine mark. Residues 249 to 308 (PSGVEVSCQDEKSQHKNRSKAMRVLRSRVYEKKREEQQAEREEARRSMVGSGDRSAKIRT) form a disordered region. Over residues 263–274 (HKNRSKAMRVLR) the composition is skewed to basic residues. A compositionally biased stretch (basic and acidic residues) spans 276 to 294 (RVYEKKREEQQAEREEARR).

The protein belongs to the prokaryotic/mitochondrial release factor family. In terms of processing, methylated by PrmC. Methylation increases the termination efficiency of RF1.

The protein resides in the cytoplasm. Functionally, peptide chain release factor 1 directs the termination of translation in response to the peptide chain termination codons UAG and UAA. This Salinibacter ruber (strain DSM 13855 / M31) protein is Peptide chain release factor 1.